We begin with the raw amino-acid sequence, 428 residues long: NADP-specific glutamate dehydrogenase (428 aa).

Lys-68 and Lys-92 together coordinate substrate. Lys-104 serves as the catalytic Proton donor. NADP(+) is bound by residues Thr-188 and Asn-219. Substrate is bound at residue Ser-356.

This sequence belongs to the Glu/Leu/Phe/Val dehydrogenases family. As to quaternary structure, homohexamer.

It catalyses the reaction L-glutamate + NADP(+) + H2O = 2-oxoglutarate + NH4(+) + NADPH + H(+). In terms of biological role, catalyzes the reversible oxidative deamination of glutamate to alpha-ketoglutarate and ammonia. This Synechocystis sp. (strain ATCC 27184 / PCC 6803 / Kazusa) protein is NADP-specific glutamate dehydrogenase (gdhA).